Reading from the N-terminus, the 451-residue chain is Tubulin gamma-1 chain (451 aa).

A Phosphoserine; by BRSK1 modification is found at serine 131. 142–148 (AGGTGSG) contributes to the GTP binding site.

It belongs to the tubulin family. As to quaternary structure, component of the gamma-tubulin ring complex (gTuRC) consisting of TUBGCP2, TUBGCP3, TUBGCP4, TUBGCP5 and TUBGCP6 and gamma-tubulin TUBG1 or TUBG2. TUBGCP2, TUBGCP3, TUBGCP4, TUBGCP5 and TUBGCP6 assemble in a 5:5:2:1:1 stoichiometry; each is associated with a gamma-tubulin, thereby arranging 14 gamma-tubulins in a helical manner. Gamma-tubulin at the first position is blocked by TUBGCP3 at the last position, allowing 13 protafilaments to grow into a microtubule. The gTuRC (via TUBGCP3 and TUBGCP6) interacts with ACTB and MZT1; the interactions form a luminal bridge that stabilizes the initial structure during complex assembly. The gTuRC (via TUBGCP2) interacts with MZT2A/MZT2B and CDK5RAP2 (via CM1 motif); the interactions play a role in gTuRC activation. Interacts with alpha-beta tubulin heterodimers; the interaction allows microtubules to nucleate from the gTuRC. Interacts with B9D2. Interacts with CDK5RAP2; the interaction is leading to centrosomal localization of TUBG1 and CDK5RAP2. Interacts with CIMAP3. Interacts with SAS6 and NUP62 at the centrosome. Interacts with EML3 (phosphorylated at 'Thr-881') and HAUS8. Interacts with DNM2; this interaction may participate in centrosome cohesion. Interacts with CCDC66. In terms of processing, phosphorylation at Ser-131 by BRSK1 regulates centrosome duplication, possibly by mediating relocation of gamma-tubulin and its associated proteins from the cytoplasm to the centrosome.

It is found in the cytoplasm. The protein resides in the cytoskeleton. Its subcellular location is the microtubule organizing center. It localises to the centrosome. The protein localises to the spindle. In terms of biological role, tubulin is the major constituent of microtubules, protein filaments consisting of alpha- and beta-tubulin heterodimers. Gamma-tubulin is a key component of the gamma-tubulin ring complex (gTuRC) which mediates microtubule nucleation. The gTuRC regulates the minus-end nucleation of alpha-beta tubulin heterodimers that grow into microtubule protafilaments, a critical step in centrosome duplication and spindle formation. The chain is Tubulin gamma-1 chain from Canis lupus familiaris (Dog).